Here is a 228-residue protein sequence, read N- to C-terminus: Urease accessory protein UreF (228 aa).

The protein belongs to the UreF family. UreD, UreF and UreG form a complex that acts as a GTP-hydrolysis-dependent molecular chaperone, activating the urease apoprotein by helping to assemble the nickel containing metallocenter of UreC. The UreE protein probably delivers the nickel.

Its subcellular location is the cytoplasm. Its function is as follows. Required for maturation of urease via the functional incorporation of the urease nickel metallocenter. In Photorhabdus laumondii subsp. laumondii (strain DSM 15139 / CIP 105565 / TT01) (Photorhabdus luminescens subsp. laumondii), this protein is Urease accessory protein UreF.